The chain runs to 256 residues: MLRIADRDFHSRLFIGSGKYSSADIMQKSLAASGSELVTLALKRVELERPTDDIVTPIQNLGLQLLPNTSGAKTAQDAIFAARLAREALGTHWLKLEIHPDPNYLLPDPIETLKAAETLVKEGFTVLPYCGADPVLCKRLEEVGCAAVMPLGAPIGSNQGLLTRDFLRIIIEQASLPVIVDAGIGAPSHAVEAMEMGADAVLVNTAIATANDPVAMSKTFRDAVIVGRQAFEAGLSQNASLKASASSPLTEFLESL.

The Schiff-base intermediate with DXP role is filled by Lys-95. Residues Gly-156, 182–183 (AG), and 204–205 (NT) each bind 1-deoxy-D-xylulose 5-phosphate.

This sequence belongs to the ThiG family. In terms of assembly, homotetramer. Forms heterodimers with either ThiH or ThiS.

The protein localises to the cytoplasm. It catalyses the reaction [ThiS sulfur-carrier protein]-C-terminal-Gly-aminoethanethioate + 2-iminoacetate + 1-deoxy-D-xylulose 5-phosphate = [ThiS sulfur-carrier protein]-C-terminal Gly-Gly + 2-[(2R,5Z)-2-carboxy-4-methylthiazol-5(2H)-ylidene]ethyl phosphate + 2 H2O + H(+). Its pathway is cofactor biosynthesis; thiamine diphosphate biosynthesis. Functionally, catalyzes the rearrangement of 1-deoxy-D-xylulose 5-phosphate (DXP) to produce the thiazole phosphate moiety of thiamine. Sulfur is provided by the thiocarboxylate moiety of the carrier protein ThiS. In vitro, sulfur can be provided by H(2)S. This is Thiazole synthase from Idiomarina loihiensis (strain ATCC BAA-735 / DSM 15497 / L2-TR).